The following is a 121-amino-acid chain: Large ribosomal subunit protein bL12 (121 aa).

Belongs to the bacterial ribosomal protein bL12 family. Homodimer. Part of the ribosomal stalk of the 50S ribosomal subunit. Forms a multimeric L10(L12)X complex, where L10 forms an elongated spine to which 2 to 4 L12 dimers bind in a sequential fashion. Binds GTP-bound translation factors.

Functionally, forms part of the ribosomal stalk which helps the ribosome interact with GTP-bound translation factors. Is thus essential for accurate translation. The protein is Large ribosomal subunit protein bL12 of Serratia proteamaculans (strain 568).